The primary structure comprises 283 residues: Phosphate import ATP-binding protein PstB 2 (283 aa).

Positions 36-278 constitute an ABC transporter domain; that stretch reads LQVKQFNFYY…PKKKQTEDYI (243 aa). 69–76 is an ATP binding site; sequence GPSGCGKS.

It belongs to the ABC transporter superfamily. Phosphate importer (TC 3.A.1.7) family. In terms of assembly, the complex is composed of two ATP-binding proteins (PstB), two transmembrane proteins (PstC and PstA) and a solute-binding protein (PstS).

Its subcellular location is the cell inner membrane. The catalysed reaction is phosphate(out) + ATP + H2O = ADP + 2 phosphate(in) + H(+). Part of the ABC transporter complex PstSACB involved in phosphate import. Responsible for energy coupling to the transport system. The sequence is that of Phosphate import ATP-binding protein PstB 2 from Nitrosococcus oceani (strain ATCC 19707 / BCRC 17464 / JCM 30415 / NCIMB 11848 / C-107).